A 52-amino-acid chain; its full sequence is uncharacterized protein (52 aa).

This is an uncharacterized protein from Saccharomyces cerevisiae (strain ATCC 204508 / S288c) (Baker's yeast).